The primary structure comprises 420 residues: Innexin-3 (420 aa).

Helical transmembrane passes span 33–53 (ATLLAFFSIMVSCKQYVGSAI), 104–124 (WVPIVLAIQAFMFYLPSWIWS), 193–213 (MLYICIKLMYLANVFVQFIIL), and 278–298 (IYLFIWFWFVFVLITTFINTL). Residues 378–405 (NRDFHHGHSTKSTSPGLEEGHHEHLYTP) form a disordered region. A compositionally biased stretch (basic and acidic residues) spans 395–405 (EEGHHEHLYTP).

It belongs to the pannexin family. Interacts with F-actin. As to expression, evenly distributed along the adjoining membranes of the two pm5 pharyngeal muscle cells.

Its subcellular location is the cell membrane. The protein resides in the cell junction. It localises to the gap junction. In terms of biological role, structural component of gap junctions. Plays a role in maintaining gap junction activity to promote phayngeal muscle contraction. This is Innexin-3 from Caenorhabditis elegans.